The chain runs to 145 residues: Copper transporter 4 (145 aa).

The next 2 helical transmembrane spans lie at 53–73 (GMYA…EWLA) and 106–126 (YLVI…AIFG).

The protein belongs to the copper transporter (Ctr) (TC 1.A.56) family. SLC31A subfamily. Highly expressed in roots and at lower levels in leaves, stems and flowers.

It localises to the membrane. Functionally, involved in the transport of copper. The sequence is that of Copper transporter 4 (COPT4) from Arabidopsis thaliana (Mouse-ear cress).